Reading from the N-terminus, the 289-residue chain is ATP synthase gamma chain (289 aa).

The protein belongs to the ATPase gamma chain family. F-type ATPases have 2 components, CF(1) - the catalytic core - and CF(0) - the membrane proton channel. CF(1) has five subunits: alpha(3), beta(3), gamma(1), delta(1), epsilon(1). CF(0) has three main subunits: a, b and c.

Its subcellular location is the cell inner membrane. Its function is as follows. Produces ATP from ADP in the presence of a proton gradient across the membrane. The gamma chain is believed to be important in regulating ATPase activity and the flow of protons through the CF(0) complex. The chain is ATP synthase gamma chain from Aromatoleum aromaticum (strain DSM 19018 / LMG 30748 / EbN1) (Azoarcus sp. (strain EbN1)).